Here is a 949-residue protein sequence, read N- to C-terminus: MSGLEDIKNETVDLEKIPIEEVFQQLKCTREGLTTQEGEDRIVIFGPNKLEEKKESKILKFLGFMWNPLSWVMEAAALMAIALANGDNRPPDWQDFVGIICLLVINSTISFIEENNAGNAAAALMAGLAPKTKVLRDGKWSEQEAAILVPGDIVSIKLGDIIPADARLLEGDPLKVDQSALTGESLPVTKHPGQEVFSGSTCKQGEIEAVVIATGVHTFFGKAAHLVDSTNQVGHFQKVLTSIGNFCICSIAIGIAIEIVVMYPIQHRKYRDGIDNLLVLLIGGIPIAMPTVLSVTMAIGSHRLSQQGAITKRMTAIEEMAGMDVLCSDKTGTLTLNKLSVDKNLVEVFCKGVEKDQVLLFAAMASRVENQDAIDAAMVGMLADPKEARAGIREVHFLPFNPVDKRTALTYIDSDGNWHRVSKGAPEQILDLANARPDLRKKVLSCIDKYAERGLRSLAVARQVVPEKTKESPGGPWEFVGLLPLFDPPRHDSAETIRRALNLGVNVKMITGDQLAIGKETGRRLGMGTNMYPSAALLGTDKDSNIASIPVEELIEKADGFAGVFPEHKYEIVKKLQERKHIVGMTGDGVNDAPALKKADIGIAVADATDAARGASDIVLTEPGLSVIISAVLTSRAIFQRMKNYTIYAVSITIRIVFGFMLIALIWEFDFSAFMVLIIAILNDGTIMTISKDRVKPSPTPDSWKLKEIFATGIVLGGYQAIMSVIFFWAAHKTDFFSDKFGVRSIRDNNDELMGAVYLQVSIISQALIFVTRSRSWSFVERPGALLMIAFVIAQLVATLIAVYADWTFAKVKGIGWGWAGVIWIYSIVTYFPQDILKFAIRYILSGKAWASLFDNRTAFTTKKDYGIGEREAQWAQAQRTLHGLQPKEDVNIFPEKGSYRELSEIAEQAKRRAEIARLRELHTLKGHVESVAKLKGLDIDTAGHHYTV.

Residue serine 2 is modified to N-acetylserine. Topologically, residues 2-61 are cytoplasmic; the sequence is SGLEDIKNETVDLEKIPIEEVFQQLKCTREGLTTQEGEDRIVIFGPNKLEEKKESKILKF. Residues 62-81 form a helical membrane-spanning segment; the sequence is LGFMWNPLSWVMEAAALMAI. Over 82–93 the chain is Extracellular; that stretch reads ALANGDNRPPDW. Residues 94 to 114 form a helical membrane-spanning segment; it reads QDFVGIICLLVINSTISFIEE. The Cytoplasmic portion of the chain corresponds to 115–243; the sequence is NNAGNAAAAL…GHFQKVLTSI (129 aa). A helical membrane pass occupies residues 244–264; sequence GNFCICSIAIGIAIEIVVMYP. The Extracellular segment spans residues 265-273; sequence IQHRKYRDG. The helical transmembrane segment at 274–291 threads the bilayer; the sequence is IDNLLVLLIGGIPIAMPT. Over 292 to 643 the chain is Cytoplasmic; sequence VLSVTMAIGS…TSRAIFQRMK (352 aa). The active-site 4-aspartylphosphate intermediate is aspartate 329. The Mg(2+) site is built by aspartate 588 and aspartate 592. The chain crosses the membrane as a helical span at residues 644 to 665; that stretch reads NYTIYAVSITIRIVFGFMLIAL. Residues 666 to 670 lie on the Extracellular side of the membrane; the sequence is IWEFD. A helical membrane pass occupies residues 671–693; that stretch reads FSAFMVLIIAILNDGTIMTISKD. Residues 694–709 lie on the Cytoplasmic side of the membrane; it reads RVKPSPTPDSWKLKEI. Residues 710-730 traverse the membrane as a helical segment; it reads FATGIVLGGYQAIMSVIFFWA. The Extracellular portion of the chain corresponds to 731-751; the sequence is AHKTDFFSDKFGVRSIRDNND. The helical transmembrane segment at 752–772 threads the bilayer; the sequence is ELMGAVYLQVSIISQALIFVT. The Cytoplasmic segment spans residues 773–784; the sequence is RSRSWSFVERPG. Residues 785–805 form a helical membrane-spanning segment; the sequence is ALLMIAFVIAQLVATLIAVYA. The Extracellular segment spans residues 806–813; the sequence is DWTFAKVK. Residues 814 to 834 traverse the membrane as a helical segment; that stretch reads GIGWGWAGVIWIYSIVTYFPQ. Residues 835–949 are Cytoplasmic-facing; sequence DILKFAIRYI…IDTAGHHYTV (115 aa). Phosphothreonine is present on threonine 881. 2 positions are modified to phosphoserine: serine 899 and serine 931. The segment at 947-949 is interaction with 14-3-3 proteins; it reads YTV. Threonine 948 carries the phosphothreonine modification.

Belongs to the cation transport ATPase (P-type) (TC 3.A.3) family. Type IIIA subfamily. In terms of assembly, binds to 14-3-3 proteins. The binding is induced by phosphorylation of Thr-948. Binding to 14-3-3 proteins activates the H(+)-ATPase. Interacts with PPI1; this interaction promotes ATPase activity. Interacts with PSY1R. Part of a functional complex containing PSKR1, BAK1, CNGC17, and AHA. Interacts with CNGC17 and PSKR1. Triggered by SAUR9 via the phosphorylation of the C-terminal autoinhibitory domain. Interacts with AHA2. Binds to CBC1 and CBC2. Post-translationally, phosphorylated, probably by PHOT1 and PHOT2, at C-terminal Thr-948 in guard cells in response to blue light to induce stomatal opening. As to expression, expressed in guard cells, mesophyll cells, leaves and roots.

Its subcellular location is the cell membrane. It carries out the reaction ATP + H2O + H(+)(in) = ADP + phosphate + 2 H(+)(out). Phosphorylation on Thr residues is repressed by tyrphostin 9, sphingosine, GW5074 and BML-265. By contrast, the fungal phytotoxin fusicoccin (FC) promotes phosphorylation of Thr-948 independently to BHP, thus leading to large stomatal opening. In terms of biological role, the plasma membrane H(+) ATPase of plants and fungi generates a proton gradient that drives the active transport of nutrients by H(+)-symport. The resulting external acidification and/or internal alkinization may mediate growth responses. Forms a functional cation-translocating unit with CNGC17 that is activated by PSKR1/BAK1 and possibly other BAK1/RLK complexes. Promotes stomatal opening in response to blue light. This chain is ATPase 1, plasma membrane-type, found in Arabidopsis thaliana (Mouse-ear cress).